Reading from the N-terminus, the 288-residue chain is Formamidopyrimidine-DNA glycosylase (288 aa).

Catalysis depends on P2, which acts as the Schiff-base intermediate with DNA. E3 serves as the catalytic Proton donor. K58 acts as the Proton donor; for beta-elimination activity in catalysis. DNA is bound by residues H101, R124, and R169. The FPG-type zinc finger occupies 254-288 (LVYDRAGLPCRVCGTPIRQIVQGQRSTFYCPACQR). R278 functions as the Proton donor; for delta-elimination activity in the catalytic mechanism.

The protein belongs to the FPG family. As to quaternary structure, monomer. Requires Zn(2+) as cofactor.

It carries out the reaction Hydrolysis of DNA containing ring-opened 7-methylguanine residues, releasing 2,6-diamino-4-hydroxy-5-(N-methyl)formamidopyrimidine.. The catalysed reaction is 2'-deoxyribonucleotide-(2'-deoxyribose 5'-phosphate)-2'-deoxyribonucleotide-DNA = a 3'-end 2'-deoxyribonucleotide-(2,3-dehydro-2,3-deoxyribose 5'-phosphate)-DNA + a 5'-end 5'-phospho-2'-deoxyribonucleoside-DNA + H(+). Functionally, involved in base excision repair of DNA damaged by oxidation or by mutagenic agents. Acts as a DNA glycosylase that recognizes and removes damaged bases. Has a preference for oxidized purines, such as 7,8-dihydro-8-oxoguanine (8-oxoG). Has AP (apurinic/apyrimidinic) lyase activity and introduces nicks in the DNA strand. Cleaves the DNA backbone by beta-delta elimination to generate a single-strand break at the site of the removed base with both 3'- and 5'-phosphates. In Ralstonia nicotianae (strain ATCC BAA-1114 / GMI1000) (Ralstonia solanacearum), this protein is Formamidopyrimidine-DNA glycosylase.